Consider the following 530-residue polypeptide: MASDFLPVHRALLSVSDKTGLVELARVLLAYNIELLSTGGTATIIREAGLPVQDVADLTGFPEMMDGRVKTLHPVVHGGLLGRAGIDDAVMAKHGIAPIDLLILNLYPFEQITAKKDCTLADAVDTIDIGGPAMLRSAAKNFARVAVATSPDQYPDLLAELQEHHGQLSAEKRFALAVAAFNHVAQYDAAISNYLSSVSDMHTTLPLRHEFPAQLNNTFVKMTELRYGENPHQTGAFYRDVHPQPGTLATFQQLQGKRLSYNNLVDADAAWECVRQFEAPACVIVKHANPCGVAVGMACSDAYEAAYATDPTSAFGGIIAFNRTLDAVTMKSILDRQFVEVFIAPYYDADALAYAAKKANVRVLRIPSSAAMKATNQYDFKRIGSGLLVQSADTMHIHSDVLRTVTTLAPTDKQRRDLMFAWRVVKYVKSNAIVYAKDNRTIGIGAGQMSRVYSARIAGIKAADAHLAVTGSVMASDAFFPFRDGIDAAAATGIKAVIQPGGSMRDNEVIAAADEHGIAMLFTGIRHFRH.

Residues 1-149 form the MGS-like domain; it reads MASDFLPVHR…KNFARVAVAT (149 aa).

Belongs to the PurH family.

The enzyme catalyses (6R)-10-formyltetrahydrofolate + 5-amino-1-(5-phospho-beta-D-ribosyl)imidazole-4-carboxamide = 5-formamido-1-(5-phospho-D-ribosyl)imidazole-4-carboxamide + (6S)-5,6,7,8-tetrahydrofolate. It catalyses the reaction IMP + H2O = 5-formamido-1-(5-phospho-D-ribosyl)imidazole-4-carboxamide. Its pathway is purine metabolism; IMP biosynthesis via de novo pathway; 5-formamido-1-(5-phospho-D-ribosyl)imidazole-4-carboxamide from 5-amino-1-(5-phospho-D-ribosyl)imidazole-4-carboxamide (10-formyl THF route): step 1/1. The protein operates within purine metabolism; IMP biosynthesis via de novo pathway; IMP from 5-formamido-1-(5-phospho-D-ribosyl)imidazole-4-carboxamide: step 1/1. This chain is Bifunctional purine biosynthesis protein PurH, found in Xylella fastidiosa (strain M12).